Consider the following 509-residue polypeptide: Bifunctional purine biosynthesis protein PurH (509 aa).

Residues 1 to 144 (MKRALISVSD…KNYAAVTVVV (144 aa)) form the MGS-like domain.

The protein belongs to the PurH family.

The enzyme catalyses (6R)-10-formyltetrahydrofolate + 5-amino-1-(5-phospho-beta-D-ribosyl)imidazole-4-carboxamide = 5-formamido-1-(5-phospho-D-ribosyl)imidazole-4-carboxamide + (6S)-5,6,7,8-tetrahydrofolate. It catalyses the reaction IMP + H2O = 5-formamido-1-(5-phospho-D-ribosyl)imidazole-4-carboxamide. It functions in the pathway purine metabolism; IMP biosynthesis via de novo pathway; 5-formamido-1-(5-phospho-D-ribosyl)imidazole-4-carboxamide from 5-amino-1-(5-phospho-D-ribosyl)imidazole-4-carboxamide (10-formyl THF route): step 1/1. Its pathway is purine metabolism; IMP biosynthesis via de novo pathway; IMP from 5-formamido-1-(5-phospho-D-ribosyl)imidazole-4-carboxamide: step 1/1. In Listeria monocytogenes serotype 4b (strain CLIP80459), this protein is Bifunctional purine biosynthesis protein PurH.